The primary structure comprises 207 residues: Probable GTP-binding protein EngB (207 aa).

The EngB-type G domain maps to A23–A197. GTP contacts are provided by residues G31–S38, G58–L62, D76–G79, T143–D146, and F176–S178. Residues S38 and T60 each contribute to the Mg(2+) site.

It belongs to the TRAFAC class TrmE-Era-EngA-EngB-Septin-like GTPase superfamily. EngB GTPase family. Requires Mg(2+) as cofactor.

Functionally, necessary for normal cell division and for the maintenance of normal septation. The polypeptide is Probable GTP-binding protein EngB (Methylobacillus flagellatus (strain ATCC 51484 / DSM 6875 / VKM B-1610 / KT)).